Consider the following 121-residue polypeptide: Large ribosomal subunit protein uL14 (121 aa).

Belongs to the universal ribosomal protein uL14 family. Part of the 50S ribosomal subunit. Forms a cluster with proteins L3 and L19. In the 70S ribosome, L14 and L19 interact and together make contacts with the 16S rRNA in bridges B5 and B8.

Its function is as follows. Binds to 23S rRNA. Forms part of two intersubunit bridges in the 70S ribosome. This is Large ribosomal subunit protein uL14 from Bacteroides fragilis (strain ATCC 25285 / DSM 2151 / CCUG 4856 / JCM 11019 / LMG 10263 / NCTC 9343 / Onslow / VPI 2553 / EN-2).